The following is a 241-amino-acid chain: tRNA pseudouridine synthase B (241 aa).

Aspartate 52 acts as the Nucleophile in catalysis.

The protein belongs to the pseudouridine synthase TruB family. Type 1 subfamily.

It catalyses the reaction uridine(55) in tRNA = pseudouridine(55) in tRNA. In terms of biological role, responsible for synthesis of pseudouridine from uracil-55 in the psi GC loop of transfer RNAs. The protein is tRNA pseudouridine synthase B of Chloroherpeton thalassium (strain ATCC 35110 / GB-78).